Consider the following 316-residue polypeptide: Acetyl-coenzyme A carboxylase carboxyl transferase subunit beta (316 aa).

Residues 39 to 308 (LWHKCSKCGV…TPPMVLWETM (270 aa)) enclose the CoA carboxyltransferase N-terminal domain. The Zn(2+) site is built by Cys43, Cys46, Cys62, and Cys65. The segment at 43–65 (CSKCGVLTYTKDLRANQMVCVEC) adopts a C4-type zinc-finger fold.

Belongs to the AccD/PCCB family. Acetyl-CoA carboxylase is a heterohexamer composed of biotin carboxyl carrier protein (AccB), biotin carboxylase (AccC) and two subunits each of ACCase subunit alpha (AccA) and ACCase subunit beta (AccD). Zn(2+) is required as a cofactor.

The protein resides in the cytoplasm. It catalyses the reaction N(6)-carboxybiotinyl-L-lysyl-[protein] + acetyl-CoA = N(6)-biotinyl-L-lysyl-[protein] + malonyl-CoA. Its pathway is lipid metabolism; malonyl-CoA biosynthesis; malonyl-CoA from acetyl-CoA: step 1/1. Its function is as follows. Component of the acetyl coenzyme A carboxylase (ACC) complex. Biotin carboxylase (BC) catalyzes the carboxylation of biotin on its carrier protein (BCCP) and then the CO(2) group is transferred by the transcarboxylase to acetyl-CoA to form malonyl-CoA. This is Acetyl-coenzyme A carboxylase carboxyl transferase subunit beta from Trichormus variabilis (strain ATCC 29413 / PCC 7937) (Anabaena variabilis).